The following is a 2563-amino-acid chain: Highly reducing polyketide synthase 2 (2563 aa).

A Ketosynthase family 3 (KS3) domain is found at Met-11–Asp-451. Catalysis depends on for beta-ketoacyl synthase activity residues Cys-182, His-317, and His-357. The Malonyl-CoA:ACP transacylase (MAT) domain occupies Phe-589 to Ser-890. An N-terminal hotdog fold region spans residues Gly-970–Asn-1101. The region spanning Gly-970–His-1269 is the PKS/mFAS DH domain. His-1002 (proton acceptor; for dehydratase activity) is an active-site residue. The tract at residues Thr-1126–His-1269 is C-terminal hotdog fold. Asp-1186 serves as the catalytic Proton donor; for dehydratase activity. Positions Phe-1296–Asp-1618 are methyltransferase (CMet) domain. The Enoyl reductase (ER) domain occupies Gly-1858–Val-2168. In terms of domain architecture, Ketoreductase (KR) spans Ser-2192–Ser-2370. One can recognise a Carrier domain in the interval Ser-2480 to Ser-2561. Ser-2521 carries the O-(pantetheine 4'-phosphoryl)serine modification.

It depends on pantetheine 4'-phosphate as a cofactor.

Its pathway is secondary metabolite biosynthesis. In terms of biological role, highly reducing polyketide synthase; part of the gene cluster that mediates the biosynthesis of the tetraketides fugralins such as linear fugralin A and cyclic fugralin B, volatile compounds that play a role in the asexual reproductive cycle but are not involved in pathogenicity. One of the key features of fugralins is the presence of a double methyl group, which is only rarely encountered in fungal secondary metabolites. As the fugralins cluster does not contain an independent methyltransferase, the PKS FGR1 is probably responsible for adding two methyl groups to the same carbon atom. Fugralin B is similar to fugralin A except for a cyclization between the carboxylic acid C-8 and the alcohol on C-4 resulting in a six membered lactone ring, probably catalyzed by the cyclase FGR4. The exact role of the individual cluster genes remains unknown and further work is needed to unravel the biosynthetic pathway. This chain is Highly reducing polyketide synthase 2, found in Gibberella zeae (strain ATCC MYA-4620 / CBS 123657 / FGSC 9075 / NRRL 31084 / PH-1) (Wheat head blight fungus).